We begin with the raw amino-acid sequence, 200 residues long: 3-isopropylmalate dehydratase small subunit 2 (200 aa).

It belongs to the LeuD family. LeuD type 1 subfamily. As to quaternary structure, heterodimer of LeuC and LeuD.

It carries out the reaction (2R,3S)-3-isopropylmalate = (2S)-2-isopropylmalate. It functions in the pathway amino-acid biosynthesis; L-leucine biosynthesis; L-leucine from 3-methyl-2-oxobutanoate: step 2/4. Its function is as follows. Catalyzes the isomerization between 2-isopropylmalate and 3-isopropylmalate, via the formation of 2-isopropylmaleate. This chain is 3-isopropylmalate dehydratase small subunit 2, found in Mannheimia succiniciproducens (strain KCTC 0769BP / MBEL55E).